We begin with the raw amino-acid sequence, 110 residues long: HIT-like protein CPn_0488/CP_0266/CPj0488/CpB0508 (110 aa).

In terms of domain architecture, HIT spans 3 to 110 (VFKQIIDGLI…LGGRPLGAIA (108 aa)). Residues 95–99 (HLHIH) carry the Histidine triad motif motif.

The sequence is that of HIT-like protein CPn_0488/CP_0266/CPj0488/CpB0508 from Chlamydia pneumoniae (Chlamydophila pneumoniae).